The primary structure comprises 380 residues: Transcription factor RF2a (380 aa).

A disordered region spans residues 1–57 (MNREKSPIPGDGGDGLPPQATRRAGPPAAAAAAEYDISRMPDFPTRNPGHRRAHSEI). Residues 16–33 (LPPQATRRAGPPAAAAAA) are compositionally biased toward low complexity. Positions 56-108 (EILSLPEDLDLCAAGGGDGPSLSDENDEELFSMFLDVEKLNSTCGASSEAEAE) are activation of RTBV promoter. In terms of domain architecture, bZIP spans 181 to 244 (DPKRAKRIWA…SGLTTENSEL (64 aa)). Residues 183–204 (KRAKRIWANRQSAARSKERKMR) are basic motif. Residues 209-244 (LERKVQTLQTEATTLSAQLALLQRDTSGLTTENSEL) are leucine-zipper. Residues 283–357 (GGMMMNFGGM…AQQLQQAARD (75 aa)) are interaction with TBP2. Residues 326–355 (QAQQQQVLHPQHQQQQPLHPLQAQQLQQAA) show a composition bias toward low complexity. The disordered stretch occupies residues 326–380 (QAQQQQVLHPQHQQQQPLHPLQAQQLQQAARDLKMKSPMGGQSQWGDGKSGSSGN).

Belongs to the bZIP family. As to quaternary structure, binds DNA as a homodimer or as a heterodimer with RF2b. The heterodimer binds stronger to DNA than the homodimer. Interacts with TBP2. In terms of tissue distribution, expressed at high levels in levels in leaf sheath, moderate levels in leaf blade, but not in roots. Predominantly expressed in vascular tissues.

It localises to the nucleus. Transcription factor probably involved in vascular development and shoot tissue organization. Binds to the DNA sequence 5'-CCGAGTGTGCCCCTGG-3' present in the promoter region Box II of the phloem-specific rice tungro bacilliform virus (RTBV) promoter. May regulate tissue-specific expression of the RTBV promoter and virus replication. The sequence is that of Transcription factor RF2a (RF2a) from Oryza sativa subsp. japonica (Rice).